The primary structure comprises 244 residues: Cobalt transport protein CbiM (244 aa).

The signal sequence occupies residues 1–27; the sequence is MVEGMLKTNFRLLFLLIFLLIPTPVLA. Helical transmembrane passes span 36 to 56, 65 to 85, 102 to 122, 134 to 154, 168 to 188, and 196 to 216; these read PVKW…VGFI, GPGA…LSAL, LAAI…VLIF, TLGA…YGVY, IFLA…VQLA, and LFLS…PLAI.

The protein belongs to the CbiM family. In terms of assembly, forms an energy-coupling factor (ECF) transporter complex composed of an ATP-binding protein (A component, CbiO), a transmembrane protein (T component, CbiQ) and 2 possible substrate-capture proteins (S components, CbiM and CbiN) of unknown stoichimetry.

The protein localises to the cell membrane. The protein operates within cofactor biosynthesis; adenosylcobalamin biosynthesis. In terms of biological role, part of the energy-coupling factor (ECF) transporter complex CbiMNOQ involved in cobalt import. In Carboxydothermus hydrogenoformans (strain ATCC BAA-161 / DSM 6008 / Z-2901), this protein is Cobalt transport protein CbiM.